Consider the following 422-residue polypeptide: MSSSVAVLWVATSSLNPDPMNNCGLVRVLESSRLFSPCQNQRLNKGKKKQIPTWSSSFVRNRSRRIGVVSSSLVASPSGEIALSSEEKVYNVVLKQAALVNKQLRSSSYDLDVKKPQDVVLPGSLSLLGEAYDRCGEVCAEYAKTFYLGTLLMTPERRKAIWAIYVWCRRTDELVDGPNASHITPMALDRWEARLEDLFRGRPFDMLDAALADTVARYPVDIQPFRDMIEGMRMDLKKSRYQNFDDLYLYCYYVAGTVGLMSVPVMGIDPKSKATTESVYNAALALGIANQLTNILRDVGEDARRGRVYLPQDELAQAGLSDEDIFAGKVTDKWRNFMKMQLKRARMFFDEAEKGVTELSAASRWPVWASLLLYRRILDEIEANDYNNFTKRAYVGKVKKIAALPLAYAKSVLKTSSSRLSI.

Residues 1 to 70 constitute a chloroplast transit peptide; that stretch reads MSSSVAVLWV…NRSRRIGVVS (70 aa).

Belongs to the phytoene/squalene synthase family. In terms of assembly, monomer. Interacts with OR. Interacts with ORLIKE.

The protein localises to the plastid. Its subcellular location is the chloroplast membrane. It carries out the reaction 2 (2E,6E,10E)-geranylgeranyl diphosphate = 15-cis-phytoene + 2 diphosphate. Its pathway is carotenoid biosynthesis; phytoene biosynthesis; all-trans-phytoene from geranylgeranyl diphosphate: step 1/1. In terms of biological role, catalyzes the reaction from prephytoene diphosphate to phytoene. In Arabidopsis thaliana (Mouse-ear cress), this protein is Phytoene synthase 1, chloroplastic.